Consider the following 395-residue polypeptide: Phosphopentomutase (395 aa).

Positions 16, 289, 294, 330, 331, and 342 each coordinate Mn(2+).

This sequence belongs to the phosphopentomutase family. Requires Mn(2+) as cofactor.

The protein localises to the cytoplasm. The catalysed reaction is 2-deoxy-alpha-D-ribose 1-phosphate = 2-deoxy-D-ribose 5-phosphate. The enzyme catalyses alpha-D-ribose 1-phosphate = D-ribose 5-phosphate. It functions in the pathway carbohydrate degradation; 2-deoxy-D-ribose 1-phosphate degradation; D-glyceraldehyde 3-phosphate and acetaldehyde from 2-deoxy-alpha-D-ribose 1-phosphate: step 1/2. Its function is as follows. Isomerase that catalyzes the conversion of deoxy-ribose 1-phosphate (dRib-1-P) and ribose 1-phosphate (Rib-1-P) to deoxy-ribose 5-phosphate (dRib-5-P) and ribose 5-phosphate (Rib-5-P), respectively. In Geobacillus kaustophilus (strain HTA426), this protein is Phosphopentomutase.